The sequence spans 748 residues: Catalase-peroxidase (748 aa).

Basic and acidic residues predominate over residues 1–14 (MTDTSDARPPHSDA). Residues 1 to 40 (MTDTSDARPPHSDAKTASNSESENPAIDSPEPKSHAPLTN) are disordered. The tryptophyl-tyrosyl-methioninium (Trp-Tyr) (with M-265) cross-link spans 112–239 (WHAAGTYRIF…FGATTMGLIY (128 aa)). His-113 (proton acceptor) is an active-site residue. The segment at residues 239-265 (YVNPEGPEGKPDPLAAAHDIRETFGRM) is a cross-link (tryptophyl-tyrosyl-methioninium (Tyr-Met) (with W-112)). His-280 provides a ligand contact to heme b.

The protein belongs to the peroxidase family. Peroxidase/catalase subfamily. In terms of assembly, homodimer or homotetramer. The cofactor is heme b. Post-translationally, formation of the three residue Trp-Tyr-Met cross-link is important for the catalase, but not the peroxidase activity of the enzyme.

The enzyme catalyses H2O2 + AH2 = A + 2 H2O. The catalysed reaction is 2 H2O2 = O2 + 2 H2O. In terms of biological role, bifunctional enzyme with both catalase and broad-spectrum peroxidase activity. This is Catalase-peroxidase from Mycolicibacterium gilvum (strain PYR-GCK) (Mycobacterium gilvum (strain PYR-GCK)).